The following is an 83-amino-acid chain: Protein CASPARIAN STRIP INTEGRITY FACTOR 2 (83 aa).

The N-terminal stretch at 1-28 (MGLLPLVKKLGFIIFLLVSASAFALCSA) is a signal peptide. The tract at residues 61-83 (SRDYGHSSPKPKLVRPPFKLIPN) is disordered. Position 64 is a sulfotyrosine (tyrosine 64). Residues proline 69 and proline 71 each carry the hydroxyproline modification.

Interacts with the specific receptor kinases GSO1 and GSO2. In terms of tissue distribution, expressed exclusively in the root stele.

In terms of biological role, peptide hormone required for contiguous Casparian strip diffusion barrier formation in roots via the regulation of CASPs protein expression and distribution in a GSO1-GSO2 signaling pathway. The Casparian strip is required for ion homeostasis (e.g. iron and potassium ions). In Arabidopsis thaliana (Mouse-ear cress), this protein is Protein CASPARIAN STRIP INTEGRITY FACTOR 2.